A 329-amino-acid polypeptide reads, in one-letter code: Cysteine synthase (329 aa).

K48 bears the N6-(pyridoxal phosphate)lysine mark. Pyridoxal 5'-phosphate is bound by residues N78, 183-187, and S278; that span reads GTGGT.

This sequence belongs to the cysteine synthase/cystathionine beta-synthase family. In terms of assembly, homodimer. It depends on pyridoxal 5'-phosphate as a cofactor.

The enzyme catalyses O-acetyl-L-serine + hydrogen sulfide = L-cysteine + acetate. Its pathway is amino-acid biosynthesis; L-cysteine biosynthesis; L-cysteine from L-serine: step 2/2. In terms of biological role, catalyzes the conversion of O-acetylserine (OAS) to cysteine through the elimination of acetate and addition of hydrogen sulfide. This Synechococcus elongatus (strain ATCC 33912 / PCC 7942 / FACHB-805) (Anacystis nidulans R2) protein is Cysteine synthase (srpG).